Consider the following 150-residue polypeptide: MEVILLSKIKKLGDSGAVINVKSGYARNFLIPKGKAILANKKNIESFEAQRIALEKEKINELLIAQSRAEKLKKINSITILSKVGKEGKIFGSVGVRNIIKEIILLGIKINKKEIRLPNGLLRQVGEHIVVFQPHSKVSINFIVKIIAKN.

This sequence belongs to the bacterial ribosomal protein bL9 family.

In terms of biological role, binds to the 23S rRNA. In Buchnera aphidicola subsp. Acyrthosiphon pisum (strain 5A), this protein is Large ribosomal subunit protein bL9.